The chain runs to 447 residues: ATP-dependent protease ATPase subunit HslU (447 aa).

ATP is bound by residues isoleucine 18, 60–65, aspartate 259, glutamate 325, and arginine 397; that span reads GVGKTE.

This sequence belongs to the ClpX chaperone family. HslU subfamily. As to quaternary structure, a double ring-shaped homohexamer of HslV is capped on each side by a ring-shaped HslU homohexamer. The assembly of the HslU/HslV complex is dependent on binding of ATP.

The protein resides in the cytoplasm. In terms of biological role, ATPase subunit of a proteasome-like degradation complex; this subunit has chaperone activity. The binding of ATP and its subsequent hydrolysis by HslU are essential for unfolding of protein substrates subsequently hydrolyzed by HslV. HslU recognizes the N-terminal part of its protein substrates and unfolds these before they are guided to HslV for hydrolysis. The protein is ATP-dependent protease ATPase subunit HslU of Burkholderia ambifaria (strain MC40-6).